The following is a 346-amino-acid chain: Elongation factor Ts (346 aa).

Residues 80–83 (TDFV) are involved in Mg(2+) ion dislocation from EF-Tu.

The protein belongs to the EF-Ts family.

It localises to the cytoplasm. Associates with the EF-Tu.GDP complex and induces the exchange of GDP to GTP. It remains bound to the aminoacyl-tRNA.EF-Tu.GTP complex up to the GTP hydrolysis stage on the ribosome. In Streptococcus suis (strain 98HAH33), this protein is Elongation factor Ts.